A 257-amino-acid chain; its full sequence is UPF0246 protein AHA_3667 (257 aa).

It belongs to the UPF0246 family.

The polypeptide is UPF0246 protein AHA_3667 (Aeromonas hydrophila subsp. hydrophila (strain ATCC 7966 / DSM 30187 / BCRC 13018 / CCUG 14551 / JCM 1027 / KCTC 2358 / NCIMB 9240 / NCTC 8049)).